The primary structure comprises 648 residues: NADP-dependent malic enzyme, chloroplastic (648 aa).

The N-terminal 61 residues, 1–61 (MISLNSSFLE…VDSAVRDVNA (61 aa)), are a transit peptide targeting the chloroplast. Y195 (proton donor) is an active-site residue. R248 provides a ligand contact to NAD(+). K266 functions as the Proton acceptor in the catalytic mechanism. The a divalent metal cation site is built by E339, D340, and D363. D363 contacts NAD(+). 392-408 (LFLGAGEAGTGIAELIA) is an NADP(+) binding site. Residue N504 participates in NAD(+) binding.

Belongs to the malic enzymes family. Homotetramer. Mg(2+) serves as cofactor. The cofactor is Mn(2+).

It is found in the plastid. Its subcellular location is the chloroplast. It catalyses the reaction (S)-malate + NADP(+) = pyruvate + CO2 + NADPH. The catalysed reaction is oxaloacetate + H(+) = pyruvate + CO2. It functions in the pathway photosynthesis; C4 acid pathway. In terms of biological role, the chloroplastic ME isoform decarboxylates malate shuttled from neighboring mesophyll cells. The CO(2) released is then refixed by ribulose-bisphosphate carboxylase. This pathway eliminates the photorespiratory loss of CO(2) that occurs in most plants. This Flaveria trinervia (Clustered yellowtops) protein is NADP-dependent malic enzyme, chloroplastic (MOD1).